Here is a 219-residue protein sequence, read N- to C-terminus: Large ribosomal subunit protein eL13 (219 aa).

The segment at 198-219 (KDAAENPDDVTKAPTAVKRNKT) is disordered.

Belongs to the eukaryotic ribosomal protein eL13 family. As to quaternary structure, component of the 60S large ribosomal subunit (LSU).

It localises to the cytoplasm. Its function is as follows. Component of the ribosome, a large ribonucleoprotein complex responsible for the synthesis of proteins in the cell. The small ribosomal subunit (SSU) binds messenger RNAs (mRNAs) and translates the encoded message by selecting cognate aminoacyl-transfer RNA (tRNA) molecules. The large subunit (LSU) contains the ribosomal catalytic site termed the peptidyl transferase center (PTC), which catalyzes the formation of peptide bonds, thereby polymerizing the amino acids delivered by tRNAs into a polypeptide chain. The nascent polypeptides leave the ribosome through a tunnel in the LSU and interact with protein factors that function in enzymatic processing, targeting, and the membrane insertion of nascent chains at the exit of the ribosomal tunnel. As part of the LSU, it is probably required for its formation and the maturation of rRNAs. This is Large ribosomal subunit protein eL13 (RpL13) from Spodoptera frugiperda (Fall armyworm).